Reading from the N-terminus, the 201-residue chain is Small ribosomal subunit protein uS4 (201 aa).

Residues 26 to 47 (LSKKNYPPGQHGNNRRRKTSEY) form a disordered region. The 63-residue stretch at 92–154 (ARLDNVVFRL…SKSLEVIADA (63 aa)) folds into the S4 RNA-binding domain.

This sequence belongs to the universal ribosomal protein uS4 family. Part of the 30S ribosomal subunit. Contacts protein S5. The interaction surface between S4 and S5 is involved in control of translational fidelity.

One of the primary rRNA binding proteins, it binds directly to 16S rRNA where it nucleates assembly of the body of the 30S subunit. In terms of biological role, with S5 and S12 plays an important role in translational accuracy. This chain is Small ribosomal subunit protein uS4, found in Porphyromonas gingivalis (strain ATCC 33277 / DSM 20709 / CIP 103683 / JCM 12257 / NCTC 11834 / 2561).